Here is a 185-residue protein sequence, read N- to C-terminus: Pyruvate/ketoisovalerate oxidoreductases common subunit gamma (185 aa).

Heterotetramer of one alpha, one beta, one delta and one gamma chain.

It carries out the reaction 2 oxidized [2Fe-2S]-[ferredoxin] + pyruvate + CoA = 2 reduced [2Fe-2S]-[ferredoxin] + acetyl-CoA + CO2 + H(+). The catalysed reaction is 3-methyl-2-oxobutanoate + 2 oxidized [2Fe-2S]-[ferredoxin] + CoA = 2-methylpropanoyl-CoA + 2 reduced [2Fe-2S]-[ferredoxin] + CO2 + H(+). The sequence is that of Pyruvate/ketoisovalerate oxidoreductases common subunit gamma (porG) from Pyrococcus furiosus (strain ATCC 43587 / DSM 3638 / JCM 8422 / Vc1).